The primary structure comprises 429 residues: Acetylornithine aminotransferase (429 aa).

Residues 126 to 127 (GA) and F160 contribute to the pyridoxal 5'-phosphate site. Residue R163 coordinates N(2)-acetyl-L-ornithine. 251–254 (DEVQ) contacts pyridoxal 5'-phosphate. K280 is subject to N6-(pyridoxal phosphate)lysine. Position 307 (S307) interacts with N(2)-acetyl-L-ornithine. T308 is a pyridoxal 5'-phosphate binding site.

Belongs to the class-III pyridoxal-phosphate-dependent aminotransferase family. ArgD subfamily. As to quaternary structure, homodimer. The cofactor is pyridoxal 5'-phosphate.

It is found in the cytoplasm. It carries out the reaction N(2)-acetyl-L-ornithine + 2-oxoglutarate = N-acetyl-L-glutamate 5-semialdehyde + L-glutamate. It functions in the pathway amino-acid biosynthesis; L-arginine biosynthesis; N(2)-acetyl-L-ornithine from L-glutamate: step 4/4. With respect to regulation, N-acetylornithine aminotransferase activity is stimulated by the addition of Mg(2+), Ca(2+) or Mn(2+), and inhibited by the addition of Zn(2+), Cu(2+), Co(2+) or Ni(2+). Catalyzes the reversible conversion of N-acetylornithine to N-acetylglutamate-5-semialdehyde. In vitro, also shows very low ornithine aminotransferase (OAT) and gamma-aminobutyrate aminotransferase (GABA-AT) activity, catalyzing the conversion of ornithine (Orn) to glutamate-5-semialdehyde and of gamma-aminobutyric acid (GABA) to succinate semialdehyde. It has been shown to function as a GABA-AT and contributes to closing the tricarboxylic acid cycle of Synechocystis sp. PCC6803 via the GABA shunt. However, the catalytic efficiency toward N-acetylornithine is 2500-fold and 10700-fold higher than that toward ornithine and gamma-aminobutyrate, respectively, indicating that the protein mainly functions as an N-acetylornithine aminotransferase. This chain is Acetylornithine aminotransferase, found in Synechocystis sp. (strain ATCC 27184 / PCC 6803 / Kazusa).